The following is a 270-amino-acid chain: 5'-nucleotidase SurE (270 aa).

A divalent metal cation-binding residues include D14, D15, S46, and N104.

Belongs to the SurE nucleotidase family. A divalent metal cation serves as cofactor.

Its subcellular location is the cytoplasm. The enzyme catalyses a ribonucleoside 5'-phosphate + H2O = a ribonucleoside + phosphate. In terms of biological role, nucleotidase that shows phosphatase activity on nucleoside 5'-monophosphates. The protein is 5'-nucleotidase SurE of Microcystis aeruginosa (strain NIES-843 / IAM M-2473).